A 1560-amino-acid polypeptide reads, in one-letter code: BRD4-interacting chromatin-remodeling complex-associated protein (1560 aa).

Disordered regions lie at residues Val53–Gln99, Ala624–Thr688, Ile723–Pro949, Asn974–Pro1028, Lys1049–Thr1075, and Ser1215–Tyr1300. Residues Ala86–Gly96 show a composition bias toward gly residues. Residues Ala624–Pro664 show a composition bias toward low complexity. Positions Ala726–Ala736 are enriched in pro residues. Over residues Pro747–Pro780 the composition is skewed to low complexity. 3 stretches are compositionally biased toward pro residues: residues Leu791–Arg806, Pro814–Leu831, and Val843–Pro880. Over residues Pro881–Ser896 the composition is skewed to low complexity. Phosphoserine is present on Ser919. Phosphothreonine is present on Thr921. A compositionally biased stretch (pro residues) spans Pro932–Arg941. A compositionally biased stretch (low complexity) spans Ala1005–Pro1028. An N6-acetyllysine modification is found at Lys1057. The segment covering Leu1227 to Thr1236 has biased composition (polar residues). The segment covering Ala1264–Leu1281 has biased composition (low complexity). Lys1313 participates in a covalent cross-link: Glycyl lysine isopeptide (Lys-Gly) (interchain with G-Cter in SUMO2). Disordered stretches follow at residues Asn1324–Ala1424 and Tyr1440–Arg1560. Over residues His1331–Thr1356 the composition is skewed to pro residues. The segment covering Pro1401–Gly1412 has biased composition (low complexity). At Ser1413 the chain carries Phosphoserine. Residues Ala1485–Pro1515 are compositionally biased toward polar residues.

In terms of assembly, component of the multiprotein chromatin-remodeling complexes SWI/SNF: SWI/SNF-A (BAF), SWI/SNF-B (PBAF) and related complexes. The canonical complex contains a catalytic subunit (either SMARCA4/BRG1/BAF190A or SMARCA2/BRM/BAF190B) and at least SMARCE1, ACTL6A/BAF53, SMARCC1/BAF155, SMARCC2/BAF170, and SMARCB1/SNF5/BAF47. Other subunits specific to each of the complexes may also be present permitting several possible combinations developmentally and tissue specific. Component of the SWI/SNF (GBAF) subcomplex, which includes at least BICRA or BICRAL (mutually exclusive), BRD9, SS18, the core BAF subunits, SMARCA2/BRM, SMARCA4/BRG1/BAF190A, ACTL6A/BAF53, SMARCC1/BAF155, and SMARCD1/BAF60A. Interacts with BRD4; the interaction bridges BRD4 to the GBAF complex. In terms of tissue distribution, expressed at moderate levels in heart, brain, placenta, skeletal muscle, and pancreas, and at lower levels in lung, liver and kidney.

It is found in the nucleus. In terms of biological role, component of SWI/SNF chromatin remodeling subcomplex GBAF that carries out key enzymatic activities, changing chromatin structure by altering DNA-histone contacts within a nucleosome in an ATP-dependent manner. May play a role in BRD4-mediated gene transcription. In Homo sapiens (Human), this protein is BRD4-interacting chromatin-remodeling complex-associated protein.